We begin with the raw amino-acid sequence, 490 residues long: Aspartyl/glutamyl-tRNA(Asn/Gln) amidotransferase subunit B (490 aa).

Belongs to the GatB/GatE family. GatB subfamily. As to quaternary structure, heterotrimer of A, B and C subunits.

The enzyme catalyses L-glutamyl-tRNA(Gln) + L-glutamine + ATP + H2O = L-glutaminyl-tRNA(Gln) + L-glutamate + ADP + phosphate + H(+). The catalysed reaction is L-aspartyl-tRNA(Asn) + L-glutamine + ATP + H2O = L-asparaginyl-tRNA(Asn) + L-glutamate + ADP + phosphate + 2 H(+). Its function is as follows. Allows the formation of correctly charged Asn-tRNA(Asn) or Gln-tRNA(Gln) through the transamidation of misacylated Asp-tRNA(Asn) or Glu-tRNA(Gln) in organisms which lack either or both of asparaginyl-tRNA or glutaminyl-tRNA synthetases. The reaction takes place in the presence of glutamine and ATP through an activated phospho-Asp-tRNA(Asn) or phospho-Glu-tRNA(Gln). The chain is Aspartyl/glutamyl-tRNA(Asn/Gln) amidotransferase subunit B from Symbiobacterium thermophilum (strain DSM 24528 / JCM 14929 / IAM 14863 / T).